The chain runs to 144 residues: Transcription antitermination protein NusB (144 aa).

It belongs to the NusB family.

Involved in transcription antitermination. Required for transcription of ribosomal RNA (rRNA) genes. Binds specifically to the boxA antiterminator sequence of the ribosomal RNA (rrn) operons. The protein is Transcription antitermination protein NusB of Dictyoglomus turgidum (strain DSM 6724 / Z-1310).